The sequence spans 254 residues: Imidazole glycerol phosphate synthase subunit HisF (254 aa).

Catalysis depends on residues Asp-12 and Asp-132.

This sequence belongs to the HisA/HisF family. As to quaternary structure, heterodimer of HisH and HisF.

The protein localises to the cytoplasm. The enzyme catalyses 5-[(5-phospho-1-deoxy-D-ribulos-1-ylimino)methylamino]-1-(5-phospho-beta-D-ribosyl)imidazole-4-carboxamide + L-glutamine = D-erythro-1-(imidazol-4-yl)glycerol 3-phosphate + 5-amino-1-(5-phospho-beta-D-ribosyl)imidazole-4-carboxamide + L-glutamate + H(+). It functions in the pathway amino-acid biosynthesis; L-histidine biosynthesis; L-histidine from 5-phospho-alpha-D-ribose 1-diphosphate: step 5/9. IGPS catalyzes the conversion of PRFAR and glutamine to IGP, AICAR and glutamate. The HisF subunit catalyzes the cyclization activity that produces IGP and AICAR from PRFAR using the ammonia provided by the HisH subunit. This Symbiobacterium thermophilum (strain DSM 24528 / JCM 14929 / IAM 14863 / T) protein is Imidazole glycerol phosphate synthase subunit HisF.